Reading from the N-terminus, the 266-residue chain is MTAISDRFETLKQNQECALIPFITAGDPDLETTAAALKILDSNGADIIELGIPYSDPLADGPVIQAAATRALQNGTKLESVLEMLKVTTPSLQAPIVLFTYYNSILHRGIDNFLEQVAAAGVAGLVVPDLPLEEAAGLLKPATERGIDLILLIAPTSSSERIEAIARSSQGFIYLVSVTGVTGMRSQVEGRVLDLLQKVRQVTDKPLGVGFGISQPAQATQVRDWGADAAIVGSAFVQRLATGTPAEGLSAIAEFCQSLKAAIKTS.

Catalysis depends on proton acceptor residues glutamate 49 and aspartate 60.

Belongs to the TrpA family. As to quaternary structure, tetramer of two alpha and two beta chains.

It carries out the reaction (1S,2R)-1-C-(indol-3-yl)glycerol 3-phosphate + L-serine = D-glyceraldehyde 3-phosphate + L-tryptophan + H2O. The protein operates within amino-acid biosynthesis; L-tryptophan biosynthesis; L-tryptophan from chorismate: step 5/5. In terms of biological role, the alpha subunit is responsible for the aldol cleavage of indoleglycerol phosphate to indole and glyceraldehyde 3-phosphate. This Trichormus variabilis (strain ATCC 29413 / PCC 7937) (Anabaena variabilis) protein is Tryptophan synthase alpha chain.